The chain runs to 160 residues: Serine-protein kinase RsbW (160 aa).

This sequence belongs to the anti-sigma-factor family.

The catalysed reaction is L-seryl-[protein] + ATP = O-phospho-L-seryl-[protein] + ADP + H(+). It carries out the reaction L-threonyl-[protein] + ATP = O-phospho-L-threonyl-[protein] + ADP + H(+). In terms of biological role, negative regulator of sigma-B activity. Phosphorylates and inactivates its specific antagonist protein, RsbV. Upon phosphorylation of RsbV, RsbW is released and binds to sigma-B, thereby blocking its ability to form an RNA polymerase holoenzyme (E-sigma-B). This chain is Serine-protein kinase RsbW, found in Bacillus cereus (strain B4264).